The primary structure comprises 636 residues: Methyl-CpG-binding domain protein 1 (636 aa).

The 69-residue stretch at 1–69 folds into the MBD domain; it reads MAESWQDCPA…TLFDFRQGTL (69 aa). Positions 75–113 are disordered; the sequence is KTHPLAVPSKKKKKPSKPAKTKKQQVGLQRSEVRIETPQ. Over residues 83 to 97 the composition is skewed to basic residues; the sequence is SKKKKKPSKPAKTKK. A Nuclear localization signal motif is present at residues 84–88; sequence KKKKK. Lysine 117 participates in a covalent cross-link: Glycyl lysine isopeptide (Lys-Gly) (interchain with G-Cter in SUMO2). 2 consecutive CXXC-type zinc fingers follow at residues 187–234 and 235–281; these read RMFK…RRCL and RIME…RRCF. Residues cysteine 194, cysteine 197, cysteine 200, cysteine 206, cysteine 209, cysteine 212, cysteine 228, cysteine 233, cysteine 243, cysteine 246, cysteine 249, cysteine 255, cysteine 258, cysteine 261, cysteine 275, and cysteine 280 each contribute to the Zn(2+) site. Residues 291-314 form a disordered region; sequence GSKVASQRHSQAPPLPPHPASQYT. A Glycyl lysine isopeptide (Lys-Gly) (interchain with G-Cter in SUMO2) cross-link involves residue lysine 293. A CXXC-type 3 zinc finger spans residues 348–396; it reads TNQRQNRKCGACAACLRRMDCGRCDFCCDKPKFGGGNQKRQKCRWRQCL. Zn(2+)-binding residues include cysteine 356, cysteine 359, cysteine 362, cysteine 368, cysteine 371, cysteine 374, cysteine 390, and cysteine 395. Residues 407 to 474 are disordered; the sequence is AGSGSGEGAG…GRGSVLPQPD (68 aa). Serine 409 is subject to Phosphoserine. Residues lysine 443 and lysine 461 each participate in a glycyl lysine isopeptide (Lys-Gly) (interchain with G-Cter in SUMO2) cross-link. Residues lysine 520 and lysine 559 each participate in a glycyl lysine isopeptide (Lys-Gly) (interchain with G-Cter in SUMO2); alternate cross-link. The interval 543-589 is disordered; the sequence is QSGFPSKAADPDLSPVKQEPPGPEEDGEEKKDDVSETTPAEEIGGVG. Residues 550 to 612 form a transcriptional repression domain (TRD) region; that stretch reads AADPDLSPVK…RLRDAEAWLP (63 aa).

In terms of assembly, interacts with OASL, ATF7IP, ATF7IP2 and BAHD1. Binds CHAF1A and the SUV39H1-CBX5 complex via the MBD domain. Binds MGP via the TRD domain. May be part of the MeCP1 complex. During DNA replication, it recruits SETDB1 to form a S phase-specific complex that facilitates methylation of H3 'Lys-9' during replication-coupled chromatin assembly and is at least composed of the CAF-1 subunit CHAF1A, MBD1 and SETDB1. Interacts with the Ten-1 ICD form of TENM1. Sumoylated, sumoylation may increase interaction with ATF7IP. Highly expressed in kidney, liver and brain. Detected at lower levels in heart, lung, skeletal muscle, spleen and testis.

The protein resides in the nucleus. It localises to the nucleus matrix. It is found in the nucleus speckle. The protein localises to the chromosome. Its function is as follows. Transcriptional repressor that binds CpG islands in promoters where the DNA is methylated at position 5 of cytosine within CpG dinucleotides. Binding is abolished by the presence of 7-mG that is produced by DNA damage by methylmethanesulfonate (MMS). Acts as transcriptional repressor and plays a role in gene silencing by recruiting ATF7IP, which in turn recruits factors such as the histone methyltransferase SETDB1. Probably forms a complex with SETDB1 and ATF7IP that represses transcription and couples DNA methylation and histone 'Lys-9' trimethylation. Isoform 1 can also repress transcription from unmethylated promoters. This Mus musculus (Mouse) protein is Methyl-CpG-binding domain protein 1.